A 246-amino-acid chain; its full sequence is 1-(5-phosphoribosyl)-5-[(5-phosphoribosylamino)methylideneamino] imidazole-4-carboxamide isomerase (246 aa).

The active-site Proton acceptor is the aspartate 10. Catalysis depends on aspartate 131, which acts as the Proton donor.

The protein belongs to the HisA/HisF family.

The protein localises to the cytoplasm. The enzyme catalyses 1-(5-phospho-beta-D-ribosyl)-5-[(5-phospho-beta-D-ribosylamino)methylideneamino]imidazole-4-carboxamide = 5-[(5-phospho-1-deoxy-D-ribulos-1-ylimino)methylamino]-1-(5-phospho-beta-D-ribosyl)imidazole-4-carboxamide. The protein operates within amino-acid biosynthesis; L-histidine biosynthesis; L-histidine from 5-phospho-alpha-D-ribose 1-diphosphate: step 4/9. The protein is 1-(5-phosphoribosyl)-5-[(5-phosphoribosylamino)methylideneamino] imidazole-4-carboxamide isomerase of Acidiphilium cryptum (strain JF-5).